We begin with the raw amino-acid sequence, 204 residues long: Ribosome maturation factor RimM (204 aa).

Residues 117–192 (DEDEFFSADL…EVTIDPPDDL (76 aa)) enclose the PRC barrel domain.

This sequence belongs to the RimM family. As to quaternary structure, binds ribosomal protein uS19.

The protein resides in the cytoplasm. An accessory protein needed during the final step in the assembly of 30S ribosomal subunit, possibly for assembly of the head region. Essential for efficient processing of 16S rRNA. May be needed both before and after RbfA during the maturation of 16S rRNA. It has affinity for free ribosomal 30S subunits but not for 70S ribosomes. This chain is Ribosome maturation factor RimM, found in Methylobacterium nodulans (strain LMG 21967 / CNCM I-2342 / ORS 2060).